The sequence spans 525 residues: Probable feruloyl esterase B-1 (525 aa).

The first 20 residues, 1-20 (MMRWFLLIGLASAAATDSSA), serve as a signal peptide directing secretion. Cystine bridges form between cysteine 26/cysteine 75, cysteine 61/cysteine 114, cysteine 187/cysteine 442, cysteine 256/cysteine 273, cysteine 282/cysteine 292, and cysteine 502/cysteine 524. N-linked (GlcNAc...) asparagine glycans are attached at residues asparagine 51, asparagine 80, and asparagine 98. Serine 188 acts as the Acyl-ester intermediate in catalysis. Positions 257, 260, 262, and 264 each coordinate Ca(2+). 3 N-linked (GlcNAc...) asparagine glycosylation sites follow: asparagine 283, asparagine 288, and asparagine 351. Residues aspartate 401 and histidine 441 each act as charge relay system in the active site.

It belongs to the tannase family.

The protein localises to the secreted. It carries out the reaction feruloyl-polysaccharide + H2O = ferulate + polysaccharide.. Its function is as follows. Involved in degradation of plant cell walls. Hydrolyzes the feruloyl-arabinose ester bond in arabinoxylans as well as the feruloyl-galactose and feruloyl-arabinose ester bonds in pectin. The chain is Probable feruloyl esterase B-1 (faeB-1) from Neosartorya fischeri (strain ATCC 1020 / DSM 3700 / CBS 544.65 / FGSC A1164 / JCM 1740 / NRRL 181 / WB 181) (Aspergillus fischerianus).